The chain runs to 2090 residues: Host cell factor 1 (2090 aa).

Ala-2 is modified (N-acetylalanine). Ser-6 is modified (phosphoserine). Kelch repeat units lie at residues 44–89 (LIVV…GFVC), 93–140 (RLLV…RLGH), 148–194 (KCYL…ITYG), 217–265 (KLVI…TIGN), and 266–313 (KMYV…LMDT). Glycyl lysine isopeptide (Lys-Gly) (interchain with G-Cter in ubiquitin) cross-links involve residues Lys-105, Lys-163, and Lys-244. A Glycyl lysine isopeptide (Lys-Gly) (interchain with G-Cter in SUMO2) cross-link involves residue Lys-282. An N6-acetyllysine modification is found at Lys-288. Lys-363 participates in a covalent cross-link: Glycyl lysine isopeptide (Lys-Gly) (interchain with G-Cter in ubiquitin). One can recognise a Fibronectin type-III 1 domain in the interval 366–469 (PPARVQLVRA…TIQVLPTVPG (104 aa)). The interval 407–434 (ATATSPTPNPVPSVPANPPKSPAPAAAA) is disordered. Residue Ser-411 is modified to Phosphoserine. Positions 413–428 (TPNPVPSVPANPPKSP) are enriched in pro residues. Residues 500 to 550 (LVTMRPAGQAGKAPVTVTSLPASVRMVVPTQSAQGTVIGSNPQMSGMAALA) form a required for interaction with OGT region. An omega-N-methylarginine mark is found at Arg-504 and Arg-524. Ser-598, Ser-666, and Ser-669 each carry phosphoserine. The tract at residues 610–722 (LKTAAAQVGT…KGPLPAGTIL (113 aa)) is interaction with SIN3A. The segment at 750–902 (ILGISSVSPS…SLAGAGAHST (153 aa)) is interaction with ZBTB17. At Lys-813 the chain carries N6-acetyllysine. The segment at 813-912 (KIITAVPKIA…SASLATPITT (100 aa)) is interaction with GABP2. HCF repeat repeat units lie at residues 1010–1035 (TLVC…TVVA), 1072–1097 (VRVC…ATSN), and 1101–1126 (QHGC…AMSS). The tract at residues 1098-1140 (MAGQHGCSNPPCETHETGTTSTATTAMSSMGTGQQRDTRHTSS) is disordered. The span at 1114–1130 (TGTTSTATTAMSSMGTG) shows a compositional bias: low complexity. The HCF repeat 4; degenerate repeat unit spans residues 1157-1182 (TQGTVKPQCQTQQANMTNTTMTVQAT). A Phosphoserine modification is found at Ser-1204. Asymmetric dimethylarginine is present on Arg-1216. Position 1223 is a phosphoserine (Ser-1223). HCF repeat repeat units lie at residues 1295–1320 (TQVC…SNAG) and 1323–1348 (QRVC…ATSN). Disordered regions lie at residues 1302–1374 (PCET…TTST) and 1444–1486 (TVTS…TTVS). The segment covering 1308–1321 (TGTTNTATTSNAGS) has biased composition (low complexity). The stretch at 1358 to 1383 (QQPAGGRPCETHQTTSTGTTMSVSVG) is one HCF repeat 7; degenerate repeat. Residues 1423–1448 (QRVCSNPPCETHETGTTHTATTVTSN) form an HCF repeat 8 repeat. The span at 1465-1475 (VVSTQGDSANI) shows a compositional bias: polar residues. Low complexity predominate over residues 1476-1486 (TSSSGITTTVS). Thr-1500 carries the phosphothreonine modification. A phosphoserine mark is found at Ser-1506, Ser-1559, and Ser-1826. 2 consecutive Fibronectin type-III domains span residues 1853–1943 (PPPP…TCLP) and 1945–2061 (FPGA…TSKD). Glycyl lysine isopeptide (Lys-Gly) (interchain with G-Cter in ubiquitin) cross-links involve residues Lys-1862 and Lys-1863. Ser-1893 is subject to Phosphoserine. The segment at 2049 to 2090 (ATQVRWLQETSKDSSGTKPASKRPMSSPEMKSAPKKSKADGQ) is disordered. An N6-acetyllysine modification is found at Lys-2060. Residue Lys-2079 forms a Glycyl lysine isopeptide (Lys-Gly) (interchain with G-Cter in SUMO2) linkage.

In terms of assembly, composed predominantly of six polypeptides ranging from 110 to 150 kDa and a minor 300 kDa polypeptide. The majority of N- and C-terminal cleavage products remain tightly, albeit non-covalently, associated. Interacts with POU2F1, CREB3, ZBTB17, EGR2, E2F4, CREBZF, SP1, GABP2, Sin3 HDAC complex (SIN3A, HDAC1, HDAC2, SUDS3), SAP30, SIN3B and FHL2. Component of a MLL1 complex, composed of at least the core components KMT2A/MLL1, ASH2L, HCFC1, WDR5 and RBBP5, as well as the facultative components BACC1, CHD8, DPY30, E2F6, HCFC2, HSP70, INO80C, KANSL1, LAS1L, MAX, MCRS1, MEN1, MGA, KAT8, PELP1, PHF20, PRP31, RING2, RUVBL1, RUVBL2, SENP3, TAF1, TAF4, TAF6, TAF7, TAF9 and TEX10. Component of a THAP1/THAP3-HCFC1-OGT complex that is required for the regulation of the transcriptional activity of RRM1. Interacts directly with THAP3 (via its HBM). Interacts (via the Kelch-repeat domain) with THAP1 (via the HBM); the interaction recruits HCHC1 to the RRM1. Interacts directly with OGT; the interaction, which requires the HCFC1 cleavage site domain, glycosylates and promotes the proteolytic processing of HCFC1 and retains OGT in the nucleus. Component of the SET1 complex, at least composed of the catalytic subunit (SETD1A or SETD1B), WDR5, WDR82, RBBP5, ASH2L, CXXC1, HCFC1 and DPY30. Component of the NSL complex at least composed of MOF/KAT8, KANSL1, KANSL2, KANSL3, MCRS1, PHF20, OGT1/OGT, WDR5 and HCFC1. Component of a complex at least composed of ZNF335, HCFC1, CCAR2, EMSY, MKI67, RBBP5, ASH2L and WDR5; the complex is formed as a result of interactions between components of a nuclear receptor-mediated transcription complex and a histone methylation complex. Within the complex interacts with ZNF335. Interacts with TET2 and TET3. Interacts with HCFC1R1. Interacts with THAP11. Interacts (via Kelch domain) with KMT2E (via HBM motif). Interacts with E2F1. Accessory scaffold component of the polycomb repressive deubiquitinase (PR-DUB) complex, at least composed of BAP1, one of ASXL1, ASXL2 or (probably) ASXL3 and one of MBD5 or MBD6; the PR-DUB core associates with a number of accessory proteins, including FOXK1, FOXK2, KDM1B, HCFC1, YY1 and OGT. Interacts with YY1 (via Gly-rich region); the interaction is direct. Interacts with BAP1 (via HBM-like motif). Post-translationally, proteolytically cleaved at one or several PPCE--THET sites within the HCF repeats. Cleavage is promoted by O-glycosylation. Further cleavage of the primary N- and C-terminal chains results in a 'trimming' and accumulation of the smaller chains. Cleavage is promoted by O-glycosylation. O-glycosylated. GlcNAcylation by OGT promotes proteolytic processing. In terms of processing, ubiquitinated. Lys-1862 and Lys-1863 are ubiquitinated both via 'Lys-48'- and 'Lys-63'-linked polyubiquitin chains. BAP1 mediated deubiquitination of 'Lys-48'-linked polyubiquitin chains; deubiquitination by BAP1 does not seem to stabilize the protein.

Its subcellular location is the cytoplasm. It localises to the nucleus. In terms of biological role, transcriptional coregulator. Serves as a scaffold protein, bridging interactions between transcription factors, including THAP11 and ZNF143, and transcriptional coregulators. Involved in control of the cell cycle. Also antagonizes transactivation by ZBTB17 and GABP2; represses ZBTB17 activation of the p15(INK4b) promoter and inhibits its ability to recruit p300. Coactivator for EGR2 and GABP2. Tethers the chromatin modifying Set1/Ash2 histone H3 'Lys-4' methyltransferase (H3K4me) and Sin3 histone deacetylase (HDAC) complexes (involved in the activation and repression of transcription respectively) together. As part of the NSL complex it may be involved in acetylation of nucleosomal histone H4 on several lysine residues. Recruits KMT2E to E2F1 responsive promoters promoting transcriptional activation and thereby facilitates G1 to S phase transition. Modulates expression of homeobox protein PDX1, perhaps acting in concert with transcription factor E2F1, thereby regulating pancreatic beta-cell growth and glucose-stimulated insulin secretion. May negatively modulate transcriptional activity of FOXO3. The polypeptide is Host cell factor 1 (Mesocricetus auratus (Golden hamster)).